Consider the following 92-residue polypeptide: Small ribosomal subunit protein uS19 (92 aa).

This sequence belongs to the universal ribosomal protein uS19 family.

Its function is as follows. Protein S19 forms a complex with S13 that binds strongly to the 16S ribosomal RNA. The sequence is that of Small ribosomal subunit protein uS19 from Yersinia pestis (strain Pestoides F).